The primary structure comprises 174 residues: Squamosa promoter-binding-like protein 4 (174 aa).

The tract at residues 1–42 is disordered; the sequence is MEGKRSQGQGYMKKKSYLVEEDMETDTDEEEEVGRDRVRGSR. Residues 19-33 show a composition bias toward acidic residues; the sequence is VEEDMETDTDEEEEV. The segment at 51-128 adopts an SBP-type zinc-finger fold; the sequence is LRLCQVDRCT…AGHNERRRKS (78 aa). Zn(2+) contacts are provided by cysteine 54, cysteine 59, cysteine 76, histidine 79, cysteine 95, cysteine 98, histidine 102, and cysteine 114. Positions 111 to 127 match the Bipartite nuclear localization signal motif; that stretch reads KRSCRRRLAGHNERRRK. The segment covering 118–127 has biased composition (basic residues); it reads LAGHNERRRK. Disordered regions lie at residues 118–148 and 155–174; these read LAGH…GQVV and SRVE…PQIR. Polar residues predominate over residues 163–174; sequence MPNSSFKRPQIR.

Requires Zn(2+) as cofactor. In terms of tissue distribution, expressed in the rib meristem and inter-primordial tissue of the inflorescence apex.

It is found in the nucleus. It localises to the cytoplasm. Its function is as follows. Trans-acting factor that binds specifically to the consensus nucleotide sequence 5'-TNCGTACAA-3' of AP1 promoter. Promotes both vegetative phase change and flowering. The polypeptide is Squamosa promoter-binding-like protein 4 (SPL4) (Arabidopsis thaliana (Mouse-ear cress)).